A 134-amino-acid chain; its full sequence is UPF0102 protein Rmet_3430 (134 aa).

It belongs to the UPF0102 family.

The polypeptide is UPF0102 protein Rmet_3430 (Cupriavidus metallidurans (strain ATCC 43123 / DSM 2839 / NBRC 102507 / CH34) (Ralstonia metallidurans)).